Consider the following 758-residue polypeptide: Probable ubiquitin carboxyl-terminal hydrolase creB (758 aa).

The interval 1–27 (MGSFLRSFRRDVGSSTPSVGATPAKKE) is disordered. Residues 57–468 (FGMENYGNTC…CAYVLFYQET (412 aa)) form the USP domain. Cys66 acts as the Nucleophile in catalysis. Disordered stretches follow at residues 116–148 (AEAQ…DSSE) and 243–268 (QPIP…SKTP). The segment covering 253-268 (TTDSSRQSISSGSKTP) has biased composition (polar residues). His419 (proton acceptor) is an active-site residue. The disordered stretch occupies residues 514–744 (IPVQDEPQRH…KGDRAGHGKW (231 aa)). The segment covering 554 to 563 (ATPPPVPPIP) has biased composition (pro residues). Positions 573-631 (KKSDIQSKKERAKEEKERKAAEKEMEKQRRKEQEARVKENQRREEAELKAALEASKASK) form a coiled coil. 2 stretches are compositionally biased toward basic and acidic residues: residues 573–650 (KKSD…DPKR) and 729–740 (DALKSPKGDRAG).

It belongs to the peptidase C19 family. In terms of assembly, interacts with creA, creC and qutD.

It catalyses the reaction Thiol-dependent hydrolysis of ester, thioester, amide, peptide and isopeptide bonds formed by the C-terminal Gly of ubiquitin (a 76-residue protein attached to proteins as an intracellular targeting signal).. In terms of biological role, ubiquitin thioesterase component of the regulatory network controlling carbon source utilization through ubiquitination and deubiquitination involving creA, creB, creC, creD and acrB. Deubiquitinates the creA catabolic repressor and the quinate permease qutD. Also plays a role in response to carbon starvation and the control of extracellular proteases activity. The chain is Probable ubiquitin carboxyl-terminal hydrolase creB (creB) from Aspergillus niger (strain ATCC MYA-4892 / CBS 513.88 / FGSC A1513).